The chain runs to 501 residues: L-arabinose isomerase (501 aa).

The Mn(2+) site is built by Glu306, Glu333, His350, and His450.

It belongs to the arabinose isomerase family. As to quaternary structure, homohexamer. Requires Mn(2+) as cofactor.

It catalyses the reaction beta-L-arabinopyranose = L-ribulose. It functions in the pathway carbohydrate degradation; L-arabinose degradation via L-ribulose; D-xylulose 5-phosphate from L-arabinose (bacterial route): step 1/3. In terms of biological role, catalyzes the conversion of L-arabinose to L-ribulose. In Serratia proteamaculans (strain 568), this protein is L-arabinose isomerase.